Consider the following 134-residue polypeptide: Large ribosomal subunit protein eL32 (134 aa).

Belongs to the eukaryotic ribosomal protein eL32 family.

This chain is Large ribosomal subunit protein eL32 (RpL32), found in Drosophila melanogaster (Fruit fly).